Reading from the N-terminus, the 407-residue chain is MTANTSRSTVLTGIGTLVTNDPTVGEGPLGLIRDAAVVFDGGVVAWVGSADSAPAGDVGHDLDGRAVLPGFVESHSHLVFGGERAEEFAARMAGQPYAAGGIRNTIEATRNATDEQLQANTRRLLDESLRSGSTTVECKTGYGQTVAHELRSTRIAASLTDEVTLLAAHVPPPEYAGRADDYVAMVCSEMIDACAPQAKWIDVFCETGAFDRDQAHAVLTAGMAKGLIPRVHGNQLREGPGVQLAVELGAASVDHVCYTTQADIDALAQSSTVATLLPGADFSTRNKYPDARALLDAGVTVALGADCNPGTSYTTSLPFCIAIAVRDMHMTPDEAIWAATAGGARALQRADVGVLRPGARADVLALDAPSYLHLAYRPGVPLVSDVWRGGELAWSAHTGHEKARALR.

2 residues coordinate Fe(3+): His75 and His77. Positions 75 and 77 each coordinate Zn(2+). Residues Arg84, Tyr142, and His169 each coordinate 4-imidazolone-5-propanoate. An N-formimidoyl-L-glutamate-binding site is contributed by Tyr142. Residue His232 coordinates Fe(3+). Position 232 (His232) interacts with Zn(2+). Position 235 (Gln235) interacts with 4-imidazolone-5-propanoate. Asp306 contributes to the Fe(3+) binding site. Asp306 provides a ligand contact to Zn(2+). N-formimidoyl-L-glutamate is bound by residues Asn308 and Gly310. Thr311 contributes to the 4-imidazolone-5-propanoate binding site.

It belongs to the metallo-dependent hydrolases superfamily. HutI family. The cofactor is Zn(2+). Fe(3+) serves as cofactor.

It localises to the cytoplasm. It carries out the reaction 4-imidazolone-5-propanoate + H2O = N-formimidoyl-L-glutamate. Its pathway is amino-acid degradation; L-histidine degradation into L-glutamate; N-formimidoyl-L-glutamate from L-histidine: step 3/3. Catalyzes the hydrolytic cleavage of the carbon-nitrogen bond in imidazolone-5-propanoate to yield N-formimidoyl-L-glutamate. It is the third step in the universal histidine degradation pathway. In Rhodococcus jostii (strain RHA1), this protein is Imidazolonepropionase.